We begin with the raw amino-acid sequence, 160 residues long: Siroheme decarboxylase NirH subunit (160 aa).

It belongs to the Ahb/Nir family. As to quaternary structure, forms a complex composed of NirDL, NirG and NirH. All proteins are required for the total conversion of siroheme to didecarboxysiroheme.

The enzyme catalyses siroheme + 2 H(+) = 12,18-didecarboxysiroheme + 2 CO2. It participates in porphyrin-containing compound metabolism. Involved in heme d1 biosynthesis. Catalyzes the decarboxylation of siroheme into didecarboxysiroheme. Siroheme is probably decarboxylated to monodecarboxysiroheme, which is in turn decarboxylated to didecarboxysiroheme. This is Siroheme decarboxylase NirH subunit from Paracoccus pantotrophus (Thiosphaera pantotropha).